Consider the following 398-residue polypeptide: Dual-specificity RNA methyltransferase RlmN (398 aa).

Residue glutamate 119 is the Proton acceptor of the active site. Residues 125–364 form the Radical SAM core domain; the sequence is DGDRATLCVS…TIVRKTRGDD (240 aa). A disulfide bridge links cysteine 132 with cysteine 369. Positions 139, 143, and 146 each coordinate [4Fe-4S] cluster. Residues 193 to 194, serine 225, 247 to 249, and asparagine 326 contribute to the S-adenosyl-L-methionine site; these read GE and SLH. Catalysis depends on cysteine 369, which acts as the S-methylcysteine intermediate.

It belongs to the radical SAM superfamily. RlmN family. It depends on [4Fe-4S] cluster as a cofactor.

The protein resides in the cytoplasm. It carries out the reaction adenosine(2503) in 23S rRNA + 2 reduced [2Fe-2S]-[ferredoxin] + 2 S-adenosyl-L-methionine = 2-methyladenosine(2503) in 23S rRNA + 5'-deoxyadenosine + L-methionine + 2 oxidized [2Fe-2S]-[ferredoxin] + S-adenosyl-L-homocysteine. The catalysed reaction is adenosine(37) in tRNA + 2 reduced [2Fe-2S]-[ferredoxin] + 2 S-adenosyl-L-methionine = 2-methyladenosine(37) in tRNA + 5'-deoxyadenosine + L-methionine + 2 oxidized [2Fe-2S]-[ferredoxin] + S-adenosyl-L-homocysteine. Its function is as follows. Specifically methylates position 2 of adenine 2503 in 23S rRNA and position 2 of adenine 37 in tRNAs. m2A2503 modification seems to play a crucial role in the proofreading step occurring at the peptidyl transferase center and thus would serve to optimize ribosomal fidelity. The chain is Dual-specificity RNA methyltransferase RlmN from Serratia proteamaculans (strain 568).